We begin with the raw amino-acid sequence, 383 residues long: 1-deoxy-D-xylulose 5-phosphate reductoisomerase (383 aa).

NADPH-binding residues include threonine 10, glycine 11, serine 12, isoleucine 13, asparagine 38, and asparagine 121. A 1-deoxy-D-xylulose 5-phosphate-binding site is contributed by lysine 122. Glutamate 123 contributes to the NADPH binding site. Aspartate 147 serves as a coordination point for Mn(2+). Residues serine 148, glutamate 149, serine 172, and histidine 195 each coordinate 1-deoxy-D-xylulose 5-phosphate. Residue glutamate 149 coordinates Mn(2+). Glycine 201 contributes to the NADPH binding site. Residues serine 208, asparagine 213, lysine 214, and glutamate 217 each coordinate 1-deoxy-D-xylulose 5-phosphate. Glutamate 217 is a Mn(2+) binding site.

It belongs to the DXR family. Mg(2+) serves as cofactor. Mn(2+) is required as a cofactor.

The enzyme catalyses 2-C-methyl-D-erythritol 4-phosphate + NADP(+) = 1-deoxy-D-xylulose 5-phosphate + NADPH + H(+). It functions in the pathway isoprenoid biosynthesis; isopentenyl diphosphate biosynthesis via DXP pathway; isopentenyl diphosphate from 1-deoxy-D-xylulose 5-phosphate: step 1/6. Catalyzes the NADPH-dependent rearrangement and reduction of 1-deoxy-D-xylulose-5-phosphate (DXP) to 2-C-methyl-D-erythritol 4-phosphate (MEP). This chain is 1-deoxy-D-xylulose 5-phosphate reductoisomerase, found in Ruthia magnifica subsp. Calyptogena magnifica.